Reading from the N-terminus, the 219-residue chain is 7-cyano-7-deazaguanine synthase (219 aa).

10 to 20 (FSGGQDSTTCL) is a binding site for ATP. Zn(2+) contacts are provided by Cys186, Cys195, Cys198, and Cys201.

The protein belongs to the QueC family. In terms of assembly, homodimer. The cofactor is Zn(2+).

It catalyses the reaction 7-carboxy-7-deazaguanine + NH4(+) + ATP = 7-cyano-7-deazaguanine + ADP + phosphate + H2O + H(+). It participates in purine metabolism; 7-cyano-7-deazaguanine biosynthesis. Functionally, catalyzes the ATP-dependent conversion of 7-carboxy-7-deazaguanine (CDG) to 7-cyano-7-deazaguanine (preQ(0)). The polypeptide is 7-cyano-7-deazaguanine synthase (Bacillus licheniformis (strain ATCC 14580 / DSM 13 / JCM 2505 / CCUG 7422 / NBRC 12200 / NCIMB 9375 / NCTC 10341 / NRRL NRS-1264 / Gibson 46)).